The chain runs to 578 residues: Isocitrate dehydrogenase kinase/phosphatase (578 aa).

ATP-binding positions include alanine 315–methionine 321 and lysine 336. Aspartate 371 is a catalytic residue.

This sequence belongs to the AceK family.

Its subcellular location is the cytoplasm. It catalyses the reaction L-seryl-[isocitrate dehydrogenase] + ATP = O-phospho-L-seryl-[isocitrate dehydrogenase] + ADP + H(+). Functionally, bifunctional enzyme which can phosphorylate or dephosphorylate isocitrate dehydrogenase (IDH) on a specific serine residue. This is a regulatory mechanism which enables bacteria to bypass the Krebs cycle via the glyoxylate shunt in response to the source of carbon. When bacteria are grown on glucose, IDH is fully active and unphosphorylated, but when grown on acetate or ethanol, the activity of IDH declines drastically concomitant with its phosphorylation. The sequence is that of Isocitrate dehydrogenase kinase/phosphatase from Escherichia coli (strain K12 / MC4100 / BW2952).